A 189-amino-acid polypeptide reads, in one-letter code: Small ribosomal subunit protein uS5 (189 aa).

In terms of domain architecture, S5 DRBM spans 22–85 (FVDKLVAINR…EAAKRDLIFV (64 aa)).

It belongs to the universal ribosomal protein uS5 family. As to quaternary structure, part of the 30S ribosomal subunit. Contacts proteins S4 and S8.

In terms of biological role, with S4 and S12 plays an important role in translational accuracy. Its function is as follows. Located at the back of the 30S subunit body where it stabilizes the conformation of the head with respect to the body. The chain is Small ribosomal subunit protein uS5 from Sinorhizobium medicae (strain WSM419) (Ensifer medicae).